We begin with the raw amino-acid sequence, 72 residues long: SRY-related protein ADW2 (72 aa).

The segment at residues 1 to 69 (VKRPMNAFMV…KHMADYADYK (69 aa)) is a DNA-binding region (HMG box).

The protein localises to the nucleus. This is SRY-related protein ADW2 from Alligator mississippiensis (American alligator).